The primary structure comprises 225 residues: Thymidylate kinase (225 aa).

12 to 19 (GGEGAGKS) serves as a coordination point for ATP.

Belongs to the thymidylate kinase family.

The catalysed reaction is dTMP + ATP = dTDP + ADP. Phosphorylation of dTMP to form dTDP in both de novo and salvage pathways of dTTP synthesis. The sequence is that of Thymidylate kinase from Chelativorans sp. (strain BNC1).